Reading from the N-terminus, the 307-residue chain is Murein tetrapeptide carboxypeptidase (307 aa).

The Nucleophile role is filled by Ser-115. Catalysis depends on charge relay system residues Glu-217 and His-285.

This sequence belongs to the peptidase S66 family. As to quaternary structure, homodimer.

Its subcellular location is the cytoplasm. The enzyme catalyses N-acetyl-D-glucosaminyl-N-acetylmuramoyl-L-alanyl-meso-2,6-diaminoheptanedioyl-D-alanine + H2O = N-acetyl-D-glucosaminyl-N-acetylmuramoyl-L-alanyl-meso-2,6-diaminoheptanedioate + D-alanine. It functions in the pathway cell wall biogenesis; peptidoglycan recycling. In terms of biological role, releases the terminal D-alanine residue from the cytoplasmic disaccharide-tetrapeptide GlcNAc-MurNAc-L-Ala-gamma-D-Glu-meso-Dap-D-Ala, which is a murein turnover product. Probably also act on free tetrapetide. May be involved in murein recycling. This is Murein tetrapeptide carboxypeptidase from Pseudomonas aeruginosa (strain ATCC 15692 / DSM 22644 / CIP 104116 / JCM 14847 / LMG 12228 / 1C / PRS 101 / PAO1).